A 343-amino-acid polypeptide reads, in one-letter code: Phosphate acyltransferase (343 aa).

Belongs to the PlsX family. In terms of assembly, homodimer. Probably interacts with PlsY.

The protein localises to the cytoplasm. It carries out the reaction a fatty acyl-[ACP] + phosphate = an acyl phosphate + holo-[ACP]. The protein operates within lipid metabolism; phospholipid metabolism. Functionally, catalyzes the reversible formation of acyl-phosphate (acyl-PO(4)) from acyl-[acyl-carrier-protein] (acyl-ACP). This enzyme utilizes acyl-ACP as fatty acyl donor, but not acyl-CoA. This is Phosphate acyltransferase from Coxiella burnetii (strain CbuG_Q212) (Coxiella burnetii (strain Q212)).